The sequence spans 489 residues: Zinc finger protein 58 (489 aa).

The 72-residue stretch at 2 to 73 folds into the KRAB domain; that stretch reads LSFWDVAIDF…KRQAAAAVHP (72 aa). Residues 78-100 form a C2H2-type 1; degenerate zinc finger; sequence NKCKDFSKAFFCKSLLTQHQRIR. C2H2-type zinc fingers lie at residues 106–128, 134–156, 162–184, 190–212, 218–240, 246–268, 274–296, 302–324, 330–352, 358–380, 386–408, 410–432, 438–460, and 466–488; these read FKCE…KRIH, YKCE…QRVH, YKCE…KRIH, YKCE…QKNH, YKCE…QRIH, YKCE…QIIH, YKCA…QRIH, CKCK…QRIH, YKCG…QRFH, YKCE…KLRH, YKCE…QKIH, YKCG…QRVH, HVCE…QLVH, and YKCE…QGIH.

This sequence belongs to the krueppel C2H2-type zinc-finger protein family. In terms of tissue distribution, expressed in liver, testis and, at considerably lower levels, in brain, spleen and heart.

It localises to the nucleus. In terms of biological role, may have a role during differentiation processes. In Mus musculus (Mouse), this protein is Zinc finger protein 58 (Zfp58).